We begin with the raw amino-acid sequence, 359 residues long: 3-dehydroquinate synthase (359 aa).

Residues 69 to 74, 103 to 107, 127 to 128, K140, K149, and 167 to 170 contribute to the NAD(+) site; these read DGEAYK, GVIGD, TT, and CLKT. The Zn(2+) site is built by E182, H245, and H262.

This sequence belongs to the sugar phosphate cyclases superfamily. Dehydroquinate synthase family. Co(2+) serves as cofactor. Zn(2+) is required as a cofactor. It depends on NAD(+) as a cofactor.

It localises to the cytoplasm. The catalysed reaction is 7-phospho-2-dehydro-3-deoxy-D-arabino-heptonate = 3-dehydroquinate + phosphate. It participates in metabolic intermediate biosynthesis; chorismate biosynthesis; chorismate from D-erythrose 4-phosphate and phosphoenolpyruvate: step 2/7. Functionally, catalyzes the conversion of 3-deoxy-D-arabino-heptulosonate 7-phosphate (DAHP) to dehydroquinate (DHQ). The sequence is that of 3-dehydroquinate synthase from Aeromonas salmonicida (strain A449).